The sequence spans 102 residues: MNKIRKGDEVIVLTGKDKGKRGTVQAVLGDKVAVEGVNVAKKHARPNPMLGTTGGVVDKVMPLHISNVALVDANGKPSRVGIKVEDGKRVRVLKTTGAVVAA.

The protein belongs to the universal ribosomal protein uL24 family. In terms of assembly, part of the 50S ribosomal subunit.

One of two assembly initiator proteins, it binds directly to the 5'-end of the 23S rRNA, where it nucleates assembly of the 50S subunit. Its function is as follows. One of the proteins that surrounds the polypeptide exit tunnel on the outside of the subunit. This is Large ribosomal subunit protein uL24 from Cupriavidus pinatubonensis (strain JMP 134 / LMG 1197) (Cupriavidus necator (strain JMP 134)).